The chain runs to 265 residues: Phosphonates import ATP-binding protein PhnC (265 aa).

One can recognise an ABC transporter domain in the interval 18–262; that stretch reads LVVEHLRKEY…HLKQIYGGEE (245 aa). ATP is bound at residue 51 to 58; that stretch reads GPSGTGKS.

It belongs to the ABC transporter superfamily. Phosphonates importer (TC 3.A.1.9.1) family. In terms of assembly, the complex is composed of two ATP-binding proteins (PhnC), two transmembrane proteins (PhnE) and a solute-binding protein (PhnD).

It localises to the cell inner membrane. It catalyses the reaction phosphonate(out) + ATP + H2O = phosphonate(in) + ADP + phosphate + H(+). Its function is as follows. Part of the ABC transporter complex PhnCDE involved in phosphonates import. Responsible for energy coupling to the transport system. The polypeptide is Phosphonates import ATP-binding protein PhnC (Nitratidesulfovibrio vulgaris (strain ATCC 29579 / DSM 644 / CCUG 34227 / NCIMB 8303 / VKM B-1760 / Hildenborough) (Desulfovibrio vulgaris)).